We begin with the raw amino-acid sequence, 359 residues long: ATP-dependent (S)-NAD(P)H-hydrate dehydratase (359 aa).

A YjeF C-terminal domain is found at 61–350; the sequence is LLEEARKVVP…SEINSVFVNN (290 aa). Residues Gly161 and 214–220 contribute to the (6S)-NADPHX site; that span reads NVVEFQR. ATP contacts are provided by residues 256-260 and 275-284; these read KGEVD and GSPRRCGGQG. Residue Asp285 participates in (6S)-NADPHX binding.

Belongs to the NnrD/CARKD family. Requires Mg(2+) as cofactor.

The catalysed reaction is (6S)-NADHX + ATP = ADP + phosphate + NADH + H(+). The enzyme catalyses (6S)-NADPHX + ATP = ADP + phosphate + NADPH + H(+). In terms of biological role, catalyzes the dehydration of the S-form of NAD(P)HX at the expense of ATP, which is converted to ADP. Together with NAD(P)HX epimerase, which catalyzes the epimerization of the S- and R-forms, the enzyme allows the repair of both epimers of NAD(P)HX, a damaged form of NAD(P)H that is a result of enzymatic or heat-dependent hydration. In Ciona intestinalis (Transparent sea squirt), this protein is ATP-dependent (S)-NAD(P)H-hydrate dehydratase.